A 785-amino-acid chain; its full sequence is Semaphorin-3F (785 aa).

Residues 1 to 18 (MLVAGLLLWASLLTGAWP) form the signal peptide. The Sema domain maps to 31 to 545 (RVRLSFKELK…SAVGVTHLSL (515 aa)). An N-linked (GlcNAc...) asparagine glycan is attached at N53. An intrachain disulfide couples C104 to C115. N126 carries N-linked (GlcNAc...) asparagine glycosylation. 5 cysteine pairs are disulfide-bonded: C133–C142, C300–C412, C324–C372, C548–C566, and C678–C746. In terms of domain architecture, Ig-like C2-type spans 605 to 690 (ANKNAVESVQ…TENNFKHVVT (86 aa)). Residues 752 to 785 (HVPPSPREAPGAPRSPEPQDQKKPRNRRHHPPDT) form a disordered region. Over residues 775 to 785 (PRNRRHHPPDT) the composition is skewed to basic residues.

It belongs to the semaphorin family. Expressed abundantly but differentially in a variety of neural and nonneural tissues. There is high expression in mammary gland, kidney, fetal brain, and lung and lower expression in heart and liver.

Its subcellular location is the secreted. May play a role in cell motility and cell adhesion. This is Semaphorin-3F (SEMA3F) from Homo sapiens (Human).